The following is a 341-amino-acid chain: Serpentine receptor class epsilon-8 (341 aa).

7 helical membrane passes run 37–57 (VGFL…FIFI), 64–86 (LTFL…CIIV), 101–123 (WILV…LPIF), 143–163 (IWVS…SAIA), 169–189 (IPVV…YIGI), 235–255 (VQIS…MDHF), and 264–284 (WSYV…PIIL).

Belongs to the nematode receptor-like protein sre family.

The protein localises to the membrane. The protein is Serpentine receptor class epsilon-8 (sre-8) of Caenorhabditis elegans.